A 639-amino-acid chain; its full sequence is DNA gyrase subunit B (639 aa).

Positions 392–402 (QAEELTRRKSA) are enriched in basic and acidic residues. The segment at 392-416 (QAEELTRRKSALESTSLPGKLADCQ) is disordered. In terms of domain architecture, Toprim spans 423-537 (SELFIVEGDS…AGYVYAAQPP (115 aa)). Residues Glu-429, Asp-502, and Asp-504 each coordinate Mg(2+). A Glycyl lysine isopeptide (Lys-Gly) (interchain with G-Cter in SAMP2) cross-link involves residue Lys-624.

This sequence belongs to the type II topoisomerase GyrB family. As to quaternary structure, heterotetramer, composed of two GyrA and two GyrB chains. In the heterotetramer, GyrA contains the active site tyrosine that forms a transient covalent intermediate with DNA, while GyrB binds cofactors and catalyzes ATP hydrolysis. Mg(2+) serves as cofactor. The cofactor is Mn(2+). Requires Ca(2+) as cofactor.

It localises to the cytoplasm. The catalysed reaction is ATP-dependent breakage, passage and rejoining of double-stranded DNA.. In terms of biological role, a type II topoisomerase that negatively supercoils closed circular double-stranded (ds) DNA in an ATP-dependent manner to modulate DNA topology and maintain chromosomes in an underwound state. Negative supercoiling favors strand separation, and DNA replication, transcription, recombination and repair, all of which involve strand separation. Also able to catalyze the interconversion of other topological isomers of dsDNA rings, including catenanes and knotted rings. Type II topoisomerases break and join 2 DNA strands simultaneously in an ATP-dependent manner. In Haloferax volcanii (strain ATCC 29605 / DSM 3757 / JCM 8879 / NBRC 14742 / NCIMB 2012 / VKM B-1768 / DS2) (Halobacterium volcanii), this protein is DNA gyrase subunit B.